The primary structure comprises 635 residues: DNA topoisomerase 4 subunit B (635 aa).

Residues Tyr-5, Asn-45, Asp-72, 113–119 (GLHGVGA), and Lys-340 contribute to the ATP site. The Toprim domain maps to 422-537 (RELFVVEGDS…KGHIYLALPP (116 aa)). 3 residues coordinate Mg(2+): Glu-428, Asp-502, and Asp-504.

Belongs to the type II topoisomerase family. ParE type 2 subfamily. As to quaternary structure, heterotetramer composed of ParC and ParE. It depends on Mg(2+) as a cofactor. Mn(2+) is required as a cofactor. Ca(2+) serves as cofactor.

The enzyme catalyses ATP-dependent breakage, passage and rejoining of double-stranded DNA.. Functionally, topoisomerase IV is essential for chromosome segregation. It relaxes supercoiled DNA. Performs the decatenation events required during the replication of a circular DNA molecule. This Mycoplasma pneumoniae (strain ATCC 29342 / M129 / Subtype 1) (Mycoplasmoides pneumoniae) protein is DNA topoisomerase 4 subunit B.